The sequence spans 119 residues: Holo-[acyl-carrier-protein] synthase (119 aa).

The Mg(2+) site is built by Asp-8 and Glu-50.

Belongs to the P-Pant transferase superfamily. AcpS family. Mg(2+) is required as a cofactor.

Its subcellular location is the cytoplasm. The enzyme catalyses apo-[ACP] + CoA = holo-[ACP] + adenosine 3',5'-bisphosphate + H(+). Functionally, transfers the 4'-phosphopantetheine moiety from coenzyme A to a Ser of acyl-carrier-protein. This chain is Holo-[acyl-carrier-protein] synthase, found in Clavibacter michiganensis subsp. michiganensis (strain NCPPB 382).